Consider the following 555-residue polypeptide: Formate--tetrahydrofolate ligase (555 aa).

Residue 64–71 (TKAGIGKT) coordinates ATP.

It belongs to the formate--tetrahydrofolate ligase family.

The enzyme catalyses (6S)-5,6,7,8-tetrahydrofolate + formate + ATP = (6R)-10-formyltetrahydrofolate + ADP + phosphate. Its pathway is one-carbon metabolism; tetrahydrofolate interconversion. This Parabacteroides distasonis (strain ATCC 8503 / DSM 20701 / CIP 104284 / JCM 5825 / NCTC 11152) protein is Formate--tetrahydrofolate ligase.